Consider the following 1496-residue polypeptide: DNA-directed RNA polymerase subunit beta' (1496 aa).

Zn(2+)-binding residues include C70, C72, C85, and C88. Residues D461, D463, and D465 each coordinate Mg(2+). Zn(2+) is bound by residues C908, C982, C989, and C992. A disordered region spans residues 1467-1496 (DKDMQVEGESEVPAIPPVAEGSAPEAPPAE).

The protein belongs to the RNA polymerase beta' chain family. As to quaternary structure, the RNAP catalytic core consists of 2 alpha, 1 beta, 1 beta' and 1 omega subunit. When a sigma factor is associated with the core the holoenzyme is formed, which can initiate transcription. Mg(2+) serves as cofactor. Requires Zn(2+) as cofactor.

The catalysed reaction is RNA(n) + a ribonucleoside 5'-triphosphate = RNA(n+1) + diphosphate. Functionally, DNA-dependent RNA polymerase catalyzes the transcription of DNA into RNA using the four ribonucleoside triphosphates as substrates. This chain is DNA-directed RNA polymerase subunit beta', found in Paramagnetospirillum magneticum (strain ATCC 700264 / AMB-1) (Magnetospirillum magneticum).